The chain runs to 169 residues: Hydroperoxy fatty acid reductase gpx1 (169 aa).

C41 is a catalytic residue.

The protein belongs to the glutathione peroxidase family. In terms of assembly, monomer.

The catalysed reaction is a hydroperoxy polyunsaturated fatty acid + NADPH + H(+) = a hydroxy polyunsaturated fatty acid + NADP(+) + H2O. Its activity is regulated as follows. Mercaptosuccinate, pCMB, and nethylmaleimide act as inhibitors of the catalytic activity. Functionally, hydroperoxy fatty acid reductase essential for the removal of lipid hydroperoxides under normal and stress conditions, leading to the protection of membrane integrity. In Synechocystis sp. (strain ATCC 27184 / PCC 6803 / Kazusa), this protein is Hydroperoxy fatty acid reductase gpx1 (gpx1).